The primary structure comprises 459 residues: Ribulose bisphosphate carboxylase (459 aa).

Asn111 serves as a coordination point for substrate. Lys166 functions as the Proton acceptor in the catalytic mechanism. Lys168 provides a ligand contact to substrate. Residues Lys191, Asp193, and Glu194 each contribute to the Mg(2+) site. N6-carboxylysine is present on Lys191. Catalysis depends on His287, which acts as the Proton acceptor. Positions 288, 321, and 368 each coordinate substrate.

This sequence belongs to the RuBisCO large chain family. Type II subfamily. As to quaternary structure, homodimer. Requires Mg(2+) as cofactor.

It carries out the reaction 2 (2R)-3-phosphoglycerate + 2 H(+) = D-ribulose 1,5-bisphosphate + CO2 + H2O. The catalysed reaction is D-ribulose 1,5-bisphosphate + O2 = 2-phosphoglycolate + (2R)-3-phosphoglycerate + 2 H(+). RuBisCO catalyzes two reactions: the carboxylation of D-ribulose 1,5-bisphosphate, the primary event in carbon dioxide fixation, as well as the oxidative fragmentation of the pentose substrate. Both reactions occur simultaneously and in competition at the same active site. This Paramagnetospirillum magnetotacticum (Aquaspirillum magnetotacticum) protein is Ribulose bisphosphate carboxylase.